A 333-amino-acid chain; its full sequence is Ketol-acid reductoisomerase (NADP(+)) (333 aa).

In terms of domain architecture, KARI N-terminal Rossmann spans 1-171; sequence MSNDTQPKIA…GGARANIIKT (171 aa). Residues 14–17, arginine 37, threonine 42, and 72–75 each bind NADP(+); these read YGSQ and DMVQ. Histidine 97 is a catalytic residue. Residue glycine 123 coordinates NADP(+). Residues 172–317 form the KARI C-terminal knotted domain; it reads TFKEETETDL…KKLRAKMVWL (146 aa). Mg(2+) contacts are provided by aspartate 180, glutamate 184, glutamate 216, and glutamate 220. Residue serine 241 coordinates substrate.

This sequence belongs to the ketol-acid reductoisomerase family. Requires Mg(2+) as cofactor.

It catalyses the reaction (2R)-2,3-dihydroxy-3-methylbutanoate + NADP(+) = (2S)-2-acetolactate + NADPH + H(+). It carries out the reaction (2R,3R)-2,3-dihydroxy-3-methylpentanoate + NADP(+) = (S)-2-ethyl-2-hydroxy-3-oxobutanoate + NADPH + H(+). It functions in the pathway amino-acid biosynthesis; L-isoleucine biosynthesis; L-isoleucine from 2-oxobutanoate: step 2/4. It participates in amino-acid biosynthesis; L-valine biosynthesis; L-valine from pyruvate: step 2/4. In terms of biological role, involved in the biosynthesis of branched-chain amino acids (BCAA). Catalyzes an alkyl-migration followed by a ketol-acid reduction of (S)-2-acetolactate (S2AL) to yield (R)-2,3-dihydroxy-isovalerate. In the isomerase reaction, S2AL is rearranged via a Mg-dependent methyl migration to produce 3-hydroxy-3-methyl-2-ketobutyrate (HMKB). In the reductase reaction, this 2-ketoacid undergoes a metal-dependent reduction by NADPH to yield (R)-2,3-dihydroxy-isovalerate. In Xanthomonas oryzae pv. oryzae (strain MAFF 311018), this protein is Ketol-acid reductoisomerase (NADP(+)).